Here is an 828-residue protein sequence, read N- to C-terminus: Beta-galactosidase (828 aa).

Residues 1–20 (MKMKQFNLLSLFLILITSFG) form the signal peptide. Asparagine 23 and asparagine 153 each carry an N-linked (GlcNAc...) asparagine glycan. Catalysis depends on glutamate 183, which acts as the Proton donor. Glutamate 252 acts as the Nucleophile in catalysis. 7 N-linked (GlcNAc...) asparagine glycosylation sites follow: asparagine 253, asparagine 350, asparagine 379, asparagine 492, asparagine 667, asparagine 799, and asparagine 803. In terms of domain architecture, SUEL-type lectin spans 742–828 (AHEHNKVELS…PKRLFVEVEC (87 aa)).

The protein belongs to the glycosyl hydrolase 35 family.

It localises to the secreted. It is found in the extracellular space. Its subcellular location is the apoplast. It carries out the reaction Hydrolysis of terminal non-reducing beta-D-galactose residues in beta-D-galactosides.. This chain is Beta-galactosidase, found in Brassica oleracea (Wild cabbage).